Reading from the N-terminus, the 142-residue chain is Hemoglobin subunit pi (142 aa).

The Globin domain occupies 2-142 (ALTQAEKAAV…ISSVLTEKYR (141 aa)). Residues His-59 and His-88 each coordinate heme b.

Belongs to the globin family.

In terms of biological role, the pi' chain is the counterpart of the alpha chain in the major early embryonic hemoglobin P. The sequence is that of Hemoglobin subunit pi from Gallus gallus (Chicken).